Reading from the N-terminus, the 92-residue chain is Protein S100-B (92 aa).

An N-acetylserine modification is found at Ser2. EF-hand domains are found at residues 13-48 (DVFH…LEEI) and 49-84 (KEQE…ITTA). His16 provides a ligand contact to Zn(2+). Ca(2+)-binding residues include Ser19, Glu22, and Asp24. His26 provides a ligand contact to Zn(2+). Ca(2+) is bound by residues Asp62, Asp64, Asp66, Glu68, and Glu73. Zn(2+) contacts are provided by His86 and His91.

This sequence belongs to the S-100 family. As to quaternary structure, dimer of either two alpha chains, or two beta chains, or one alpha and one beta chain. The S100B dimer binds two molecules of STK38. Interacts with CACYBP in a calcium-dependent manner. Interacts with ATAD3A; this interaction probably occurs in the cytosol prior to ATAD3A mitochondrial targeting. Interacts with S100A6. The S100B dimer interacts with two molecules of CAPZA1. Interacts with AGER. Interacts with PPP5C (via TPR repeats); the interaction is calcium-dependent and modulates PPP5C activity. Interacts with TPPP; this interaction inhibits TPPP dimerization. Interacts with isoform CLSTN3beta of CLSTN3; interaction promotes secretion.

The protein localises to the cytoplasm. Its subcellular location is the nucleus. It is found in the secreted. Small zinc- and- and calcium-binding protein that is highly expressed in astrocytes and constitutes one of the most abundant soluble proteins in brain. Weakly binds calcium but binds zinc very tightly-distinct binding sites with different affinities exist for both ions on each monomer. Physiological concentrations of potassium ion antagonize the binding of both divalent cations, especially affecting high-affinity calcium-binding sites. Acts as a neurotrophic factor that promotes astrocytosis and axonal proliferation. Involved in innervation of thermogenic adipose tissue by acting as an adipocyte-derived neurotrophic factor that promotes sympathetic innervation of adipose tissue. Binds to and initiates the activation of STK38 by releasing autoinhibitory intramolecular interactions within the kinase. Interaction with AGER after myocardial infarction may play a role in myocyte apoptosis by activating ERK1/2 and p53/TP53 signaling. Could assist ATAD3A cytoplasmic processing, preventing aggregation and favoring mitochondrial localization. May mediate calcium-dependent regulation on many physiological processes by interacting with other proteins, such as TPR-containing proteins, and modulating their activity. The chain is Protein S100-B (S100B) from Bos taurus (Bovine).